Here is a 72-residue protein sequence, read N- to C-terminus: Translation initiation factor IF-1 (72 aa).

Positions 1–72 (MAKEDVIEVE…NRGRIIYRFK (72 aa)) constitute an S1-like domain.

It belongs to the IF-1 family. In terms of assembly, component of the 30S ribosomal translation pre-initiation complex which assembles on the 30S ribosome in the order IF-2 and IF-3, IF-1 and N-formylmethionyl-tRNA(fMet); mRNA recruitment can occur at any time during PIC assembly.

The protein resides in the cytoplasm. In terms of biological role, one of the essential components for the initiation of protein synthesis. Stabilizes the binding of IF-2 and IF-3 on the 30S subunit to which N-formylmethionyl-tRNA(fMet) subsequently binds. Helps modulate mRNA selection, yielding the 30S pre-initiation complex (PIC). Upon addition of the 50S ribosomal subunit IF-1, IF-2 and IF-3 are released leaving the mature 70S translation initiation complex. This chain is Translation initiation factor IF-1, found in Syntrophomonas wolfei subsp. wolfei (strain DSM 2245B / Goettingen).